The sequence spans 320 residues: Ferrochelatase (320 aa).

Residues histidine 194 and glutamate 275 each coordinate Fe cation.

Belongs to the ferrochelatase family.

It localises to the cytoplasm. It catalyses the reaction heme b + 2 H(+) = protoporphyrin IX + Fe(2+). The protein operates within porphyrin-containing compound metabolism; protoheme biosynthesis; protoheme from protoporphyrin-IX: step 1/1. Catalyzes the ferrous insertion into protoporphyrin IX. This is Ferrochelatase from Pectobacterium atrosepticum (strain SCRI 1043 / ATCC BAA-672) (Erwinia carotovora subsp. atroseptica).